The primary structure comprises 224 residues: Claudin-19 (224 aa).

At 1-7 the chain is on the cytoplasmic side; that stretch reads MANSGLQ. A helical membrane pass occupies residues 8 to 28; it reads LLGYFLALGGWVGIIASTALP. Residues 29 to 81 lie on the Extracellular side of the membrane; sequence QWKQSSYAGDAIITAVGLYEGLWMSCASQSTGQVQCKLYDSLLALDGHIQSAR. Cysteine 54 and cysteine 64 are joined by a disulfide. The helical transmembrane segment at 82–102 threads the bilayer; it reads ALMVVAVLLGFVAMVLSVVGM. Topologically, residues 103 to 117 are cytoplasmic; sequence KCTRVGDSNPTAKGR. A helical membrane pass occupies residues 118 to 138; that stretch reads VAISGGALFLLAGLCTLTAVS. Topologically, residues 139-160 are extracellular; that stretch reads WYATLVTQEFFNPSTPVNARYE. A helical membrane pass occupies residues 161 to 181; that stretch reads FGPALFVGWASAGLAILGGSF. At 182–224 the chain is on the cytoplasmic side; it reads LCCTCPEPERANSIPQPYRSGPSTAAREPVVKLSTSVKGPLGV.

This sequence belongs to the claudin family. In terms of assembly, can form homo- and heteropolymeric tight junction strands. Interacts with other claudins including CLDN3, CLDN10, CLDN16 and CLDN18 with highest affinity for CLDN16. Interacts (via PDZ-binding motif TRV) with TJP1 (via PDZ domain).

The protein localises to the cell junction. Its subcellular location is the tight junction. It is found in the cell membrane. The catalysed reaction is Mg(2+)(in) = Mg(2+)(out). It carries out the reaction Ca(2+)(in) = Ca(2+)(out). It catalyses the reaction Na(+)(in) = Na(+)(out). The enzyme catalyses K(+)(in) = K(+)(out). The catalysed reaction is Rb(+)(in) = Rb(+)(out). It carries out the reaction Cs(+)(in) = Cs(+)(out). It catalyses the reaction Li(+)(in) = Li(+)(out). Forms paracellular channels: coassembles with CLDN16 into tight junction strands with cation-selective channels through the strands, conveying epithelial permeability in a process known as paracellular tight junction permeability. Involved in the maintenance of ion gradients along the nephron. In the thick ascending limb (TAL) of Henle's loop, facilitates sodium paracellular permeability from the interstitial compartment to the lumen, contributing to the lumen-positive transepithelial potential that drives paracellular magnesium and calcium reabsorption. Forms paracellular barriers on its own. In the peripheral nervous system, represents a major constituent of the tight junctions in Schwann cells and contributes to electrical sealing. During retinal neurogenesis, may regulate the barrier properties of tight junctions in retinal pigment epithelium, required for proper retinal tissue differentiation and vision. The chain is Claudin-19 from Rattus norvegicus (Rat).